The following is a 294-amino-acid chain: RNA exonuclease 4 (294 aa).

Over residues 1-13 (MVLSSNWLSLQKS) the composition is skewed to polar residues. Positions 1-56 (MVLSSNWLSLQKSTDSDSVNKNKGGKKTKSNSKKRTVSVKKDKQYVDKKKKNGTGS) are disordered. Over residues 23 to 38 (KGGKKTKSNSKKRTVS) the composition is skewed to basic residues. The region spanning 119-271 (YVSMDCEFVG…EDARATMLLY (153 aa)) is the Exonuclease domain.

It belongs to the REXO4 family.

Its subcellular location is the nucleus. In terms of biological role, exoribonuclease involved in ribosome biosynthesis. Involved in the processing of ITS1, the internal transcribed spacer localized between the 18S and 5.8S rRNAs. In Kluyveromyces lactis (strain ATCC 8585 / CBS 2359 / DSM 70799 / NBRC 1267 / NRRL Y-1140 / WM37) (Yeast), this protein is RNA exonuclease 4 (REX4).